The following is a 508-amino-acid chain: Photosystem II CP47 reaction center protein (508 aa).

A run of 6 helical transmembrane segments spans residues S21–S36, I101–W115, G140–F156, I203–S218, V237–V252, and S457–R472.

It belongs to the PsbB/PsbC family. PsbB subfamily. In terms of assembly, PSII is composed of 1 copy each of membrane proteins PsbA, PsbB, PsbC, PsbD, PsbE, PsbF, PsbH, PsbI, PsbJ, PsbK, PsbL, PsbM, PsbT, PsbX, PsbY, PsbZ, Psb30/Ycf12, at least 3 peripheral proteins of the oxygen-evolving complex and a large number of cofactors. It forms dimeric complexes. Requires Binds multiple chlorophylls. PSII binds additional chlorophylls, carotenoids and specific lipids. as cofactor.

The protein localises to the plastid. The protein resides in the chloroplast thylakoid membrane. Its function is as follows. One of the components of the core complex of photosystem II (PSII). It binds chlorophyll and helps catalyze the primary light-induced photochemical processes of PSII. PSII is a light-driven water:plastoquinone oxidoreductase, using light energy to abstract electrons from H(2)O, generating O(2) and a proton gradient subsequently used for ATP formation. The chain is Photosystem II CP47 reaction center protein from Manihot esculenta (Cassava).